The following is a 262-amino-acid chain: Putative 1-acyl-sn-glycerol-3-phosphate acyltransferase acl-1 (262 aa).

3 helical membrane-spanning segments follow: residues 3 to 23, 29 to 49, and 89 to 109; these read FLAILFVIAVLLLLAQLPVIG, VYFGMCLIIGGFLGGLASIPF, and IIIANHQSALDVLGMSFAWPV. Residues 94–99 carry the HXXXXD motif motif; it reads HQSALD.

Belongs to the 1-acyl-sn-glycerol-3-phosphate acyltransferase family.

It localises to the membrane. It carries out the reaction a 1-acyl-sn-glycero-3-phosphate + an acyl-CoA = a 1,2-diacyl-sn-glycero-3-phosphate + CoA. It participates in phospholipid metabolism; CDP-diacylglycerol biosynthesis; CDP-diacylglycerol from sn-glycerol 3-phosphate: step 2/3. Functionally, converts lysophosphatidic acid (LPA) into phosphatidic acid by incorporating an acyl moiety at the sn-2 position of the glycerol backbone. This Caenorhabditis elegans protein is Putative 1-acyl-sn-glycerol-3-phosphate acyltransferase acl-1 (acl-1).